The primary structure comprises 142 residues: uncharacterized protein (142 aa).

The N-acetyltransferase domain maps to 1 to 120 (MADKFDANDE…TILKWEKNMD (120 aa)).

It belongs to the acetyltransferase family.

This is an uncharacterized protein from Streptococcus pyogenes serotype M3 (strain ATCC BAA-595 / MGAS315).